The chain runs to 373 residues: Probable leucine aminopeptidase 1 (373 aa).

Residues 1–18 (MKLLSVLALSATATSVLG) form the signal peptide. Positions 176 and 195 each coordinate Zn(2+). Residue asparagine 196 is glycosylated (N-linked (GlcNAc...) asparagine). Residues glutamate 234 and aspartate 261 each coordinate Zn(2+). Asparagine 288 is a glycosylation site (N-linked (GlcNAc...) asparagine). Cysteine 310 and cysteine 314 are joined by a disulfide. A Zn(2+)-binding site is contributed by histidine 343.

It belongs to the peptidase M28 family. M28E subfamily. In terms of assembly, monomer. Zn(2+) serves as cofactor.

Its subcellular location is the secreted. Extracellular aminopeptidase which contributes to pathogenicity. This is Probable leucine aminopeptidase 1 (LAP1) from Trichophyton verrucosum (strain HKI 0517).